Consider the following 501-residue polypeptide: Serine/threonine-protein kinase pelle (501 aa).

The tract at residues 1–25 is disordered; it reads MSGVQTAEAEAQAQNQANGNRTRSR. Residues 7-18 show a composition bias toward low complexity; it reads AEAEAQAQNQAN. Residues 55-121 enclose the Death domain; the sequence is WQQLATAVKL…NAMRLIKDYV (67 aa). Residues 144-176 are disordered; that stretch reads DSSAKVNNGPPFPSSSGVSNSNNNRTSTTATEE. Residues 149–167 are compositionally biased toward low complexity; the sequence is VNNGPPFPSSSGVSNSNNN. Residues 213–499 form the Protein kinase domain; it reads WSPDNRLGQG…AVLKRFEPFV (287 aa). ATP is bound by residues 219-227 and Lys-240; that span reads LGQGGFGDV. Asp-346 acts as the Proton acceptor in catalysis. Residues 348 to 351 and Asp-364 each bind ATP; that span reads KPAN.

This sequence belongs to the protein kinase superfamily. TKL Ser/Thr protein kinase family. Pelle subfamily. Interacts (via Death domain) with tub (via Death domain). Interacts with Pellino (Pli).

The protein localises to the cell membrane. It is found in the cytoplasm. The enzyme catalyses L-seryl-[protein] + ATP = O-phospho-L-seryl-[protein] + ADP + H(+). It carries out the reaction L-threonyl-[protein] + ATP = O-phospho-L-threonyl-[protein] + ADP + H(+). Functionally, plays an essential role in the Tl receptor signaling pathway that establishes embryonic dorsoventral polarity; the signal directs import of dl into ventral and ventrolateral nuclei, thereby establishing dorsoventral polarity. Tub recruits pll to the plasma membrane and protein-protein interaction activates pll. The sequence is that of Serine/threonine-protein kinase pelle (pll) from Drosophila melanogaster (Fruit fly).